The primary structure comprises 379 residues: Glutamate 5-kinase (379 aa).

ATP is bound at residue Lys-17. Residues Ser-57, Asp-144, and Asn-156 each contribute to the substrate site. 176 to 177 lines the ATP pocket; sequence SD. Positions 282-359 constitute a PUA domain; that stretch reads SGILMIDQGA…EEIESILGYE (78 aa).

The protein belongs to the glutamate 5-kinase family.

It localises to the cytoplasm. The enzyme catalyses L-glutamate + ATP = L-glutamyl 5-phosphate + ADP. The protein operates within amino-acid biosynthesis; L-proline biosynthesis; L-glutamate 5-semialdehyde from L-glutamate: step 1/2. In terms of biological role, catalyzes the transfer of a phosphate group to glutamate to form L-glutamate 5-phosphate. The sequence is that of Glutamate 5-kinase from Bartonella henselae (strain ATCC 49882 / DSM 28221 / CCUG 30454 / Houston 1) (Rochalimaea henselae).